The following is a 1454-amino-acid chain: Probable cleavage and polyadenylation specificity factor subunit 1 (1454 aa).

Residues 736 to 765 form a disordered region; the sequence is KQSNTRKRKRLGHDAIQSSRGGEQSDAIDP.

Belongs to the CPSF1 family. As to quaternary structure, CPSF is a heterotetramer composed of four distinct subunits 160 (cpsf-1), 100 (cpsf-2), 70 (cpsf-3), and 30 kDa (cpsf-4).

It localises to the nucleus. CPSF plays a key role in pre-mRNA 3'-end formation, recognizing the AAUAAA signal sequence and interacting with poly(A)polymerase and other factors to bring about cleavage and poly(A) addition. This subunit is involved in the RNA recognition step of the polyadenylation reaction. This is Probable cleavage and polyadenylation specificity factor subunit 1 (cpsf-1) from Caenorhabditis elegans.